The primary structure comprises 284 residues: Four and a half LIM domains protein 5 (284 aa).

The segment at C8–C32 adopts a C4-type zinc-finger fold. LIM zinc-binding domains follow at residues N39–S100, K101–A160, H161–N220, and V223–D283.

As to quaternary structure, interacts with CREM (via the third LIM domain). Interacts (via second LIM domain) with SPAG8.

The protein localises to the nucleus. Functionally, may be involved in the regulation of spermatogenesis. Stimulates CREM transcriptional activity in a phosphorylation-independent manner. This chain is Four and a half LIM domains protein 5 (FHL5), found in Macaca fascicularis (Crab-eating macaque).